The chain runs to 433 residues: Serendipity locus protein delta (433 aa).

Residues M1–K90 enclose the ZAD domain. Positions 4, 7, 61, and 64 each coordinate Zn(2+). The interval D141 to E162 is disordered. Residues V149–E162 show a composition bias toward acidic residues. Residues P187–K193 carry the Nuclear localization signal motif. 7 consecutive C2H2-type zinc fingers follow at residues Q194 to H217, H223 to H245, K251 to H273, Y279 to H301, I308 to H330, H337 to H359, and G405 to H428.

As to quaternary structure, homodimer (via ZAD domain) in solution. Binds DNA as a homodimer. N-terminal regions of the protein are required, in addition to the zinc fingers, for the specificity of chromatin-binding. Predominantly localized to the sub- and supraesophagal ganglia and the ventral nerve cord in the embryo, after dorsal closure.

The protein localises to the nucleus. Transcriptional activator that controls bicoid gene expression during oogenesis. Found in transcriptionally active cells. Binds to specific sites on polytene chromosomes of third instar larvae. Binds to the consensus DNA sequence 5'-YTAGAGATGGRAA-3'. This chain is Serendipity locus protein delta (Sry-delta), found in Drosophila melanogaster (Fruit fly).